Reading from the N-terminus, the 926-residue chain is DNA mismatch repair protein MutS (926 aa).

A disordered region spans residues 16-40; it reads VASTPTRRGRPPGSSAARASNGAGS. Over residues 26-40 the composition is skewed to low complexity; sequence PPGSSAARASNGAGS. An ATP-binding site is contributed by 658-665; sequence GPNMAGKS.

Belongs to the DNA mismatch repair MutS family.

In terms of biological role, this protein is involved in the repair of mismatches in DNA. It is possible that it carries out the mismatch recognition step. This protein has a weak ATPase activity. This is DNA mismatch repair protein MutS from Granulibacter bethesdensis (strain ATCC BAA-1260 / CGDNIH1).